The following is a 331-amino-acid chain: Olfactory receptor 10S1 (331 aa).

Residues 1-38 (MTSRSVCEKMTMTTENPNQTVVSHFFLEGLRYTAKHSS) lie on the Extracellular side of the membrane. N-linked (GlcNAc...) asparagine glycosylation is present at asparagine 18. Residues 39–59 (LFFLLFLLIYSITVAGNLLIL) traverse the membrane as a helical segment. At 60–67 (LTVGSDSH) the chain is on the cytoplasmic side. Residues 68–88 (LSLPMYHFLGHLSFLDACLST) traverse the membrane as a helical segment. The Extracellular portion of the chain corresponds to 89 to 113 (VTVPKVMAGLLTLDGKVISFEGCAV). The cysteines at positions 111 and 203 are disulfide-linked. Residues 114-134 (QLYCFHFLASTECFLYTVMAY) traverse the membrane as a helical segment. Topologically, residues 135-153 (DRYLAICQPLHYPVAMNRR) are cytoplasmic. The chain crosses the membrane as a helical span at residues 154–174 (MCAEMAGITWAIGATHAAIHT). At 175-211 (SLTFRLLYCGPCHIAYFFCDIPPVLKLACTDTTINEL) the chain is on the extracellular side. A helical transmembrane segment spans residues 212–231 (VMLASIGIVAAGCLILIVIS). Topologically, residues 232–251 (YIFIVAAVLRIRTAQGRQRA) are cytoplasmic. Residues 252 to 272 (FSPCTAQLTGVLLYYVPPVCI) form a helical membrane-spanning segment. The Extracellular portion of the chain corresponds to 273 to 283 (YLQPRSSEAGA). The chain crosses the membrane as a helical span at residues 284-304 (GAPAVFYTIVTPMLNPFIYTL). The Cytoplasmic segment spans residues 305-331 (RNKEVKHALQRLLCSSFRESTAGSPPP).

This sequence belongs to the G-protein coupled receptor 1 family.

Its subcellular location is the cell membrane. Functionally, odorant receptor. This is Olfactory receptor 10S1 (OR10S1) from Homo sapiens (Human).